The primary structure comprises 410 residues: Multifunctional CCA protein (410 aa).

Residues Gly-8 and Arg-11 each coordinate ATP. Gly-8 and Arg-11 together coordinate CTP. Mg(2+)-binding residues include Asp-21 and Asp-23. Residues Arg-91, Arg-137, and Arg-140 each contribute to the ATP site. The CTP site is built by Arg-91, Arg-137, and Arg-140. The HD domain maps to 228–329 (TGVHVLSVLQ…LELLQSFDVY (102 aa)).

Belongs to the tRNA nucleotidyltransferase/poly(A) polymerase family. Bacterial CCA-adding enzyme type 1 subfamily. As to quaternary structure, monomer. Can also form homodimers and oligomers. Requires Mg(2+) as cofactor. It depends on Ni(2+) as a cofactor.

The catalysed reaction is a tRNA precursor + 2 CTP + ATP = a tRNA with a 3' CCA end + 3 diphosphate. It carries out the reaction a tRNA with a 3' CCA end + 2 CTP + ATP = a tRNA with a 3' CCACCA end + 3 diphosphate. Functionally, catalyzes the addition and repair of the essential 3'-terminal CCA sequence in tRNAs without using a nucleic acid template. Adds these three nucleotides in the order of C, C, and A to the tRNA nucleotide-73, using CTP and ATP as substrates and producing inorganic pyrophosphate. tRNA 3'-terminal CCA addition is required both for tRNA processing and repair. Also involved in tRNA surveillance by mediating tandem CCA addition to generate a CCACCA at the 3' terminus of unstable tRNAs. While stable tRNAs receive only 3'-terminal CCA, unstable tRNAs are marked with CCACCA and rapidly degraded. This Pseudomonas aeruginosa (strain LESB58) protein is Multifunctional CCA protein.